The primary structure comprises 249 residues: Ribonuclease 3 (249 aa).

An RNase III domain is found at 29–151 (SSDIEVIKKN…LIGALYECLR (123 aa)). A Mg(2+)-binding site is contributed by Glu-65. Asp-69 is an active-site residue. Glu-137 and Glu-140 together coordinate Mg(2+). Glu-140 is a catalytic residue. The DRBM domain maps to 179–249 (NEKSALQEWS…AKEALKKLTN (71 aa)). Residues 227-249 (GWGSSRKKAQKEAAKEALKKLTN) form a disordered region. A compositionally biased stretch (basic and acidic residues) spans 236–249 (QKEAAKEALKKLTN).

It belongs to the ribonuclease III family. As to quaternary structure, homodimer. Mg(2+) serves as cofactor.

It localises to the cytoplasm. It carries out the reaction Endonucleolytic cleavage to 5'-phosphomonoester.. Digests double-stranded RNA. Involved in the processing of primary rRNA transcript to yield the immediate precursors to the large and small rRNAs (23S and 16S). Processes some mRNAs, and tRNAs when they are encoded in the rRNA operon. Processes pre-crRNA and tracrRNA of type II CRISPR loci if present in the organism. The sequence is that of Ribonuclease 3 from Prochlorococcus marinus (strain SARG / CCMP1375 / SS120).